Reading from the N-terminus, the 1160-residue chain is AF4/FMR2 family member 4 (1160 aa).

Residues 1–19 (MNREDRNVLRMKERERRNQ) are compositionally biased toward basic and acidic residues. Disordered stretches follow at residues 1–42 (MNRE…YKVT), 78–289 (PKPA…SKAH), 322–908 (WPPP…FDDR), and 1031–1070 (NSYSNSQAPSPGLGSKAVGMPSPVSPKLSPGNSGSYSSGG). The segment covering 115 to 128 (PSTSQSQKRSSALQ) has biased composition (polar residues). The residue at position 120 (serine 120) is a Phosphoserine. The segment covering 172–189 (RSSSPGKPQAVSSLSSSH) has biased composition (low complexity). Positions 193 to 212 (HGNDHHSKEHQRSKSPRDPD) are enriched in basic and acidic residues. Serine 207 is subject to Phosphoserine. Low complexity predominate over residues 229 to 247 (SSQSFPPSLMSKSSSMLQK). Composition is skewed to polar residues over residues 268–280 (EHYSSQSHGNSMT) and 360–370 (YSTAKTSNGHQ). Phosphoserine is present on residues serine 382, serine 383, serine 384, and serine 387. The segment covering 398 to 407 (PRSTPGSNSE) has biased composition (polar residues). Residues 408 to 424 (PSHHNSEGADNSRDDSS) are compositionally biased toward basic and acidic residues. Positions 425–457 (SHSGSESSSGSDSESESSSSDSEANEPSQSASP) are enriched in low complexity. Residues serine 482, serine 485, and serine 486 each carry the phosphoserine modification. Composition is skewed to polar residues over residues 483-496 (PASSVDSNIPSSQA), 505-523 (GTASNYTDPGGTKETSSAT), and 544-555 (SPAQSDSTTQRR). Residue serine 544 is modified to Phosphoserine. A compositionally biased stretch (basic and acidic residues) spans 563-581 (KKPEKSAAEEPRGGLKIES). Residue lysine 578 forms a Glycyl lysine isopeptide (Lys-Gly) (interchain with G-Cter in SUMO2) linkage. A compositionally biased stretch (basic residues) spans 594–607 (SRHKAATKGSRKPN). A compositionally biased stretch (basic and acidic residues) spans 608–622 (IKKESKSSPRPTAEK). A compositionally biased stretch (low complexity) spans 641–657 (TDTSSSDSDGSESLPPS). The residue at position 666 (serine 666) is a Phosphoserine. At threonine 669 the chain carries Phosphothreonine. Phosphoserine is present on residues serine 675, serine 689, serine 698, and serine 701. A Phosphotyrosine modification is found at tyrosine 707. 3 stretches are compositionally biased toward basic and acidic residues: residues 725-756 (PYKETEPPKGEKKNVPEKHSREVQKQASEKAS), 764-784 (KNDDDTRASESKKPKTEDKNS), and 794-806 (ESSKQSSTKEKDL). The residue at position 809 (serine 809) is a Phosphoserine. Lysine 817 is subject to N6-acetyllysine. Serine 831 is subject to Phosphoserine. Low complexity-rich tracts occupy residues 831–859 (SQSSSLKSSGTSSKENSGSSSKSSSSSTA) and 880–895 (PNSSSNCPPSTPTSES). Phosphoserine is present on residues serine 1040, serine 1052, serine 1055, and serine 1059. A compositionally biased stretch (low complexity) spans 1059 to 1070 (SPGNSGSYSSGG).

This sequence belongs to the AF4 family. As to quaternary structure, component of the super elongation complex (SEC), at least composed of EAF1, EAF2, CDK9, MLLT3/AF9, AFF (AFF1 or AFF4), the P-TEFb complex and ELL (ELL, ELL2 or ELL3). Interacts with ELL2; the interaction is direct and leads to stabilize ELL2 and prevent ELL2 ubiquitination and degradation. Interacts with ELL3; the interaction is direct. Dephosphorylated at Ser-544 by the PNUTS-PP1 complex, promoting RNA polymerase II transcription pause-release. In terms of tissue distribution, highly expressed in testis by Sertoli cells, and at low levels in other tissues.

The protein resides in the nucleus. It localises to the chromosome. Its function is as follows. Key component of the super elongation complex (SEC), a complex required to increase the catalytic rate of RNA polymerase II transcription by suppressing transient pausing by the polymerase at multiple sites along the DNA. In the SEC complex, AFF4 acts as a central scaffold that recruits other factors through direct interactions with ELL proteins (ELL, ELL2 or ELL3) and the P-TEFb complex. The protein is AF4/FMR2 family member 4 (Aff4) of Mus musculus (Mouse).